The primary structure comprises 490 residues: UDP-N-acetylmuramate--L-alanine ligase (490 aa).

An ATP-binding site is contributed by 122–128 (GTHGKTS).

It belongs to the MurCDEF family.

The protein resides in the cytoplasm. The catalysed reaction is UDP-N-acetyl-alpha-D-muramate + L-alanine + ATP = UDP-N-acetyl-alpha-D-muramoyl-L-alanine + ADP + phosphate + H(+). It participates in cell wall biogenesis; peptidoglycan biosynthesis. Its function is as follows. Cell wall formation. The sequence is that of UDP-N-acetylmuramate--L-alanine ligase from Mycobacteroides abscessus (strain ATCC 19977 / DSM 44196 / CCUG 20993 / CIP 104536 / JCM 13569 / NCTC 13031 / TMC 1543 / L948) (Mycobacterium abscessus).